The sequence spans 99 residues: Small ribosomal subunit protein bS18 (99 aa).

This sequence belongs to the bacterial ribosomal protein bS18 family. Part of the 30S ribosomal subunit. Forms a tight heterodimer with protein bS6.

Its function is as follows. Binds as a heterodimer with protein bS6 to the central domain of the 16S rRNA, where it helps stabilize the platform of the 30S subunit. The protein is Small ribosomal subunit protein bS18 of Christiangramia forsetii (strain DSM 17595 / CGMCC 1.15422 / KT0803) (Gramella forsetii).